We begin with the raw amino-acid sequence, 133 residues long: Small ribosomal subunit protein uS8 (133 aa).

It belongs to the universal ribosomal protein uS8 family. As to quaternary structure, part of the 30S ribosomal subunit. Contacts proteins S5 and S12.

In terms of biological role, one of the primary rRNA binding proteins, it binds directly to 16S rRNA central domain where it helps coordinate assembly of the platform of the 30S subunit. This is Small ribosomal subunit protein uS8 from Deinococcus geothermalis (strain DSM 11300 / CIP 105573 / AG-3a).